The sequence spans 246 residues: Ribonuclease 3 (246 aa).

The RNase III domain maps to 10–135 (LENFLTLNNI…FVAAIYLDLG (126 aa)). Glu50 is a Mg(2+) binding site. Asp54 is an active-site residue. Mg(2+) contacts are provided by Asp121 and Glu124. Glu124 is an active-site residue. In terms of domain architecture, DRBM spans 161 to 230 (DPKSSFQEYI…ATRALETLKA (70 aa)).

It belongs to the ribonuclease III family. As to quaternary structure, homodimer. Mg(2+) serves as cofactor.

Its subcellular location is the cytoplasm. The catalysed reaction is Endonucleolytic cleavage to 5'-phosphomonoester.. In terms of biological role, digests double-stranded RNA. Involved in the processing of primary rRNA transcript to yield the immediate precursors to the large and small rRNAs (23S and 16S). Processes some mRNAs, and tRNAs when they are encoded in the rRNA operon. Processes pre-crRNA and tracrRNA of type II CRISPR loci if present in the organism. The sequence is that of Ribonuclease 3 from Mycoplasma mobile (strain ATCC 43663 / 163K / NCTC 11711) (Mesomycoplasma mobile).